We begin with the raw amino-acid sequence, 293 residues long: MAEGQIIKALSGFYYVLSEGKVFQCRGRGVFRKQKVTPLVGDRVVFTATGEAEGYILEICERQNELVRPPVANVEQAILVFSAVSPDFSAKLLDRFLVLVESKNITPVIVISKIDLLDGGMKETIAQYVRDYRHIGYEVIETSTVTKEGLDELMSHLCGRVSVVAGQSGVGKSSLLNALRPDLQLKTGDISTHLGRGKHTTRHVELLAIAGGLVADTPGFSALEFDHIELDELPYYFPEFRAYGEGCKFRGCLHVAEPKCAVREAAEAGDIAPYRYDHYLSFVAEMKERKPRY.

A CP-type G domain is found at 63 to 223; the sequence is QNELVRPPVA…VADTPGFSAL (161 aa). GTP is bound by residues 112 to 115 and 166 to 174; these read SKID and GQSGVGKSS. Residues cysteine 247, cysteine 252, histidine 254, and cysteine 260 each coordinate Zn(2+).

This sequence belongs to the TRAFAC class YlqF/YawG GTPase family. RsgA subfamily. Monomer. Associates with 30S ribosomal subunit, binds 16S rRNA. It depends on Zn(2+) as a cofactor.

The protein localises to the cytoplasm. One of several proteins that assist in the late maturation steps of the functional core of the 30S ribosomal subunit. Helps release RbfA from mature subunits. May play a role in the assembly of ribosomal proteins into the subunit. Circularly permuted GTPase that catalyzes slow GTP hydrolysis, GTPase activity is stimulated by the 30S ribosomal subunit. The sequence is that of Small ribosomal subunit biogenesis GTPase RsgA from Geobacillus thermodenitrificans (strain NG80-2).